Reading from the N-terminus, the 332-residue chain is MYDLTFLLISLFPIDITLPTRQPQNKPFLLPQATYETSHNISDPAVSLHGLKMSISTTETDNFKPVHTLVSSPVTIVLTGSLLFIIFTGFFSFFFCGCLFRKLMRIWNNHRNRNRPSNLIQPSNPPENLGLDSKIIESFPEYPYSVKDHGTDQCSICLTEFMDDDTIRLISTCNHSFHTICIDLWFEGHKTCPVCRRELDVEDRTSLEKPLEVPEIDLVRSEIHDEPLPRDTVTIIVHEEHPSTTIGSLEHTDEIESYERRMKASNLRFWRSHSTGHSIVVKTENEQEEEEEEEKDEIKIRIEISGECQFEDHKMTLPNRKLYCVRGTYSVG.

An N-terminal signal peptide occupies residues 1–19 (MYDLTFLLISLFPIDITLP). A helical membrane pass occupies residues 76–96 (IVLTGSLLFIIFTGFFSFFFC). The segment at 154 to 196 (CSICLTEFMDDDTIRLISTCNHSFHTICIDLWFEGHKTCPVCR) adopts an RING-type; atypical zinc-finger fold.

Belongs to the RING-type zinc finger family. ATL subfamily.

It localises to the membrane. It catalyses the reaction S-ubiquitinyl-[E2 ubiquitin-conjugating enzyme]-L-cysteine + [acceptor protein]-L-lysine = [E2 ubiquitin-conjugating enzyme]-L-cysteine + N(6)-ubiquitinyl-[acceptor protein]-L-lysine.. It participates in protein modification; protein ubiquitination. The chain is RING-H2 finger protein ATL81 (ATL81) from Arabidopsis thaliana (Mouse-ear cress).